The following is a 92-amino-acid chain: WAP four-disulfide core domain protein 12 (92 aa).

Positions 1–23 (MGSSRFLVLMVSLALVTLVAAEG) are cleaved as a signal peptide. Residues 27–74 (NIEKPEVCPADNVRCIKSDPPQCHTDQDCQGIRKCCYLHCGFKCVIPV) enclose the WAP domain. 4 disulfides stabilise this stretch: C34/C62, C41/C66, C49/C61, and C55/C70.

The protein resides in the secreted. Antibacterial protein. Putative acid-stable proteinase inhibitor. The protein is WAP four-disulfide core domain protein 12 (WFDC12) of Aotus nancymaae (Ma's night monkey).